Here is a 164-residue protein sequence, read N- to C-terminus: MDAVMFGLETPLMAALQHLLDVPDGDAGAGGDNKTGSGGSATRTYVRDARAMAATPADVKELPGAYAFVVDMPGLGTGDIRVQVEDERVLVVSGERRREEREDDAKYLRMERRMGKFMRKFVLPDNADVDKVAAVCRDGVLTVTVEKLPPPEPKKPKTIEVKVA.

Residues 48–164 (DARAMAATPA…KPKTIEVKVA (117 aa)) enclose the sHSP domain.

It belongs to the small heat shock protein (HSP20) family.

The protein localises to the cytoplasm. The polypeptide is 17.8 kDa class II heat shock protein (Zea mays (Maize)).